The sequence spans 179 residues: Coatomer subunit zeta-2 (179 aa).

It belongs to the adaptor complexes small subunit family. Oligomeric complex that consists of at least the alpha, beta, beta', gamma, delta, epsilon and zeta subunits.

The protein localises to the cytoplasm. It is found in the golgi apparatus membrane. It localises to the cytoplasmic vesicle. Its subcellular location is the COPI-coated vesicle membrane. The coatomer is a cytosolic protein complex that binds to dilysine motifs and reversibly associates with Golgi non-clathrin-coated vesicles, which further mediate biosynthetic protein transport from the ER, via the Golgi up to the trans Golgi network. Coatomer complex is required for budding from Golgi membranes, and is essential for the retrograde Golgi-to-ER transport of dilysine-tagged proteins. The zeta subunit may be involved in regulating the coat assembly and, hence, the rate of biosynthetic protein transport due to its association-dissociation properties with the coatomer complex. The chain is Coatomer subunit zeta-2 from Arabidopsis thaliana (Mouse-ear cress).